A 220-amino-acid polypeptide reads, in one-letter code: MILIVGLGNPGNEYKNTKHNIGFMLIDELLSSDFSSLKSSKFQGELFKKGEILLLKPQTFMNLSGNSVKAVNDFYKPERIIVIHDDLDLNFGALRFKRGGSSGGHNGIKSIDNLIGNDYERVRIGIGRGQGNAANIVLSKFNNDEDKKLVEILSTAKKAVEFLIKNDINLTSQKFSRKGLKSEILSKNSDDENLNSQNSALKNLIKNVKISQISCSSEKK.

TRNA is bound at residue tyrosine 14. Histidine 19 acts as the Proton acceptor in catalysis. The tRNA site is built by phenylalanine 60, asparagine 62, and asparagine 106.

The protein belongs to the PTH family. Monomer.

It localises to the cytoplasm. The catalysed reaction is an N-acyl-L-alpha-aminoacyl-tRNA + H2O = an N-acyl-L-amino acid + a tRNA + H(+). Functionally, hydrolyzes ribosome-free peptidyl-tRNAs (with 1 or more amino acids incorporated), which drop off the ribosome during protein synthesis, or as a result of ribosome stalling. Its function is as follows. Catalyzes the release of premature peptidyl moieties from peptidyl-tRNA molecules trapped in stalled 50S ribosomal subunits, and thus maintains levels of free tRNAs and 50S ribosomes. The polypeptide is Peptidyl-tRNA hydrolase (Campylobacter hominis (strain ATCC BAA-381 / DSM 21671 / CCUG 45161 / LMG 19568 / NCTC 13146 / CH001A)).